The chain runs to 229 residues: Coiled-coil domain-containing protein 134 (229 aa).

A signal peptide spans 1 to 22; it reads MDLLQFLAAFSVLLWPGTEVTG. Asn148 carries N-linked (GlcNAc...) asparagine glycosylation. Positions 182 to 229 are disordered; it reads FKTDQTEFIPSTDPFQKALREEEKRRKKEERRKEIRKGPRISRSQSEL. A coiled-coil region spans residues 196–218; sequence FQKALREEEKRRKKEERRKEIRK. The short motif at 226–229 is the Prevents secretion from ER element; sequence QSEL.

It belongs to the CCDC134 family. As to quaternary structure, interacts with TADA2A. Associates with the PCAF complex via TADA2A binding. O-glycosylated, with additional sialic acid modifications.

It localises to the endoplasmic reticulum lumen. It is found in the secreted. The protein localises to the cytoplasm. The protein resides in the nucleus. Functionally, molecular adapter required to prevent protein hyperglycosylation of HSP90B1: during translation, associates with nascent HSP90B1 and the STT3A catalytic component of the OST-A complex and tethers them to a specialized translocon that forms a microenvironment for HSP90B1 folding. In the CCDC134-containing translocon, STT3A associates with the SRT pseudosubstrate motif of HSP90B1, preventing access to facultative glycosylation sites until folding is completed, preventing hyperglycosylation and subsequent degradation of HSP90B1. In extracellular secreted form, promotes proliferation and activation of CD8(+) T-cells, suggesting a cytokine-like function. May inhibit ERK and JNK signaling activity. May suppress cell migration and invasion activity, via its effects on ERK and JNK signaling. May also localize in the nucleus: enhances stability of the PCAF histone acetyltransferase (HAT) complex member TADA2A and thus promotes PCAF-mediated histone acetyltransferase activity. Has a critical role in the regulation of osteogenesis and bone development. The polypeptide is Coiled-coil domain-containing protein 134 (Ccdc134) (Mus musculus (Mouse)).